Reading from the N-terminus, the 209-residue chain is High frequency lysogenization protein HflD homolog (209 aa).

The protein belongs to the HflD family.

It localises to the cytoplasm. The protein resides in the cell inner membrane. The protein is High frequency lysogenization protein HflD homolog of Sodalis glossinidius (strain morsitans).